Consider the following 477-residue polypeptide: 3-isopropylmalate dehydratase large subunit 1 (477 aa).

Residues Cys357, Cys417, and Cys420 each contribute to the [4Fe-4S] cluster site.

It belongs to the aconitase/IPM isomerase family. LeuC type 1 subfamily. Heterodimer of LeuC and LeuD. It depends on [4Fe-4S] cluster as a cofactor.

It carries out the reaction (2R,3S)-3-isopropylmalate = (2S)-2-isopropylmalate. It functions in the pathway amino-acid biosynthesis; L-leucine biosynthesis; L-leucine from 3-methyl-2-oxobutanoate: step 2/4. Catalyzes the isomerization between 2-isopropylmalate and 3-isopropylmalate, via the formation of 2-isopropylmaleate. The protein is 3-isopropylmalate dehydratase large subunit 1 of Bradyrhizobium diazoefficiens (strain JCM 10833 / BCRC 13528 / IAM 13628 / NBRC 14792 / USDA 110).